A 37-amino-acid chain; its full sequence is Large ribosomal subunit protein bL36A (37 aa).

It belongs to the bacterial ribosomal protein bL36 family.

This Leifsonia xyli subsp. xyli (strain CTCB07) protein is Large ribosomal subunit protein bL36A.